The chain runs to 436 residues: Mannitol-binding protein (436 aa).

The signal sequence occupies residues 1 to 22; it reads MNDSIKACLAAACLALPLLAQG.

Belongs to the bacterial solute-binding protein 1 family.

It localises to the periplasm. Binds mannitol with high affinity. The protein is Mannitol-binding protein of Pseudomonas aeruginosa (strain ATCC 15692 / DSM 22644 / CIP 104116 / JCM 14847 / LMG 12228 / 1C / PRS 101 / PAO1).